The primary structure comprises 448 residues: MNITTAPGLIGRSTQAITPGYMSGFGNSFETEALPGALPIGRNSPQRAPYGLYAEQLSGSPFTAPRGSNERSWLYRIRPSVQHSGRFEKAEAGLWRSAPCHEHDMPIAQLRWDPPPLPQRAQTFLQGVETMTTAGDVNTQAGMAAHMYLISASMVNQHFYNADGELMFVPQQGGLRLVTEFGVIGVAPGEIAVIPRGVKFRVELIDGPARGYLCENYGGGFTLPERGPIGANCLANARDFLTPVAAYEDSDTPTELYVKWGGALWVTQLPHSPIDVVAWHGNYAPYKYDLRTFSPVGAIGFDHPDPSIFTVLTSPSETAGTANIDFVIFPERWMVAENTFRPPWYHMNIMSEFMGLIYGVYDAKPQGFLPGGASLHNMMLPHGPDREAFDHASNAELKPVKLEGTLAFMFETRYPQRVTVHAATSSTLQADYAECWRGLQKRFDPTKP.

Histidine 303 (proton acceptor) is an active-site residue. 2 residues coordinate Fe cation: histidine 346 and glutamate 352. Positions 361 and 382 each coordinate homogentisate. Histidine 382 provides a ligand contact to Fe cation.

This sequence belongs to the homogentisate dioxygenase family. In terms of assembly, hexamer; dimer of trimers. The cofactor is Fe cation.

The catalysed reaction is homogentisate + O2 = 4-maleylacetoacetate + H(+). It participates in amino-acid degradation; L-phenylalanine degradation; acetoacetate and fumarate from L-phenylalanine: step 4/6. In terms of biological role, involved in the catabolism of homogentisate (2,5-dihydroxyphenylacetate or 2,5-OH-PhAc), a central intermediate in the degradation of phenylalanine and tyrosine. Catalyzes the oxidative ring cleavage of the aromatic ring of homogentisate to yield maleylacetoacetate. The polypeptide is Homogentisate 1,2-dioxygenase (Rhodopseudomonas palustris (strain BisB18)).